Consider the following 435-residue polypeptide: tRNA(Ile)-lysidine synthase (435 aa).

24-29 (SGGLDS) provides a ligand contact to ATP.

This sequence belongs to the tRNA(Ile)-lysidine synthase family.

Its subcellular location is the cytoplasm. The enzyme catalyses cytidine(34) in tRNA(Ile2) + L-lysine + ATP = lysidine(34) in tRNA(Ile2) + AMP + diphosphate + H(+). Ligates lysine onto the cytidine present at position 34 of the AUA codon-specific tRNA(Ile) that contains the anticodon CAU, in an ATP-dependent manner. Cytidine is converted to lysidine, thus changing the amino acid specificity of the tRNA from methionine to isoleucine. In Chromobacterium violaceum (strain ATCC 12472 / DSM 30191 / JCM 1249 / CCUG 213 / NBRC 12614 / NCIMB 9131 / NCTC 9757 / MK), this protein is tRNA(Ile)-lysidine synthase.